Reading from the N-terminus, the 142-residue chain is Galactose-6-phosphate isomerase subunit LacA (142 aa).

Belongs to the LacAB/RpiB family. As to quaternary structure, heteromultimeric protein consisting of LacA and LacB.

The enzyme catalyses aldehydo-D-galactose 6-phosphate = keto-D-tagatose 6-phosphate. Its pathway is carbohydrate metabolism; D-galactose 6-phosphate degradation; D-tagatose 6-phosphate from D-galactose 6-phosphate: step 1/1. The sequence is that of Galactose-6-phosphate isomerase subunit LacA from Enterococcus faecalis (strain ATCC 700802 / V583).